Here is a 947-residue protein sequence, read N- to C-terminus: MEDDTPDVSSDSNGDAAYSDYFLDYKSIMDEITITTQPKSGYVIRNKPLRLQCRANHATKIRYKCSSKWIDDSRIEKLIGTDSTSGVGYIDASVDISRIDVDTSGHVDAFQCQCYASGDDDQDVVASDVATVHLAYMRKHFLKSPVAQRVQEGTTLQLPCQAPESDPKAELTWYKDGVVVQPDANVIRASDGSLIMSAARLSDSGNYTCEATNVANSRKTDPVEVQIYVDGGWSEWSPWIGTCHVDCPLLRQHAHRIRDPHDVLPHQRRTRTCNNPAPLNDGEYCKGEEEMTRSCKVPCKLDGGWSSWSDWSACSSSCHRYRTRACTVPPPMNGGQPCFGDDLMTQECPAQLCTADSSRIVISDTAVYGSVASIFIVASFILAILAMFCCKRGNSKKSKPLKPQKMNSEKAGGIYYSEPPGVRRLLLEHQHGTLLGEKISSCSQYFEPPPLPHSTTLRSGKSAFSGYSSTRNAGSRAALIQECSSSSSGSGGKRTMLRTSSSNCSDDDNYATLYDYMEDKSVLGLDTSQNIVAAQIDSNGARLSLSKSGARLIVPELAVEGEKMLYLAVSDTLTDQPHLKPIESALSPVIVIGQCDVSMSAHDNILRRPVVVSFRHCASTFPRDNWQFTLYADEGSGWQKAVTIGEENLNTNMFVQFEQPGKKNDGFGWCHVMTYSLARLMLAGHPRRNSLSAAKRVHLAVFGPTEMSAYRRPFELRVYCVPETGAAMESVWKQEDGSRLLCESNDFILNEKGNLCICIEDVIPGFSCDGPEVVEISETQHRFVAQNGLHCSLKFRPKEINGSQFSTRVIVYQKASSTEPMVMEVSNEPELYDATSEEREKGSVCVEFRLPFGVKDELARLLDMPNESHSDWRGLAKKLHYDRYLQFFASFPDCSPTSLLLDLWEASSSGSARAVPDLLQTLRVMGRPDAVMVLERFLSAFPQIVSP.

Residues 43–141 (VIRNKPLRLQ…VHLAYMRKHF (99 aa)) enclose the Ig-like domain. 5 cysteine pairs are disulfide-bonded: Cys-53–Cys-112, Cys-160–Cys-209, Cys-243–Cys-295, Cys-247–Cys-299, and Cys-273–Cys-285. The 88-residue stretch at 139 to 226 (KHFLKSPVAQ…SRKTDPVEVQ (88 aa)) folds into the Ig-like C2-type domain. Asn-206 carries an N-linked (GlcNAc...) asparagine glycan. TSP type-1 domains lie at 230–300 (DGGW…VPCK) and 302–354 (DGGW…QLCT). 2 C-linked (Man) tryptophan glycosylation sites follow: Trp-305 and Trp-308. The chain crosses the membrane as a helical span at residues 369 to 389 (GSVASIFIVASFILAILAMFC). Residues 390-947 (CKRGNSKKSK…LSAFPQIVSP (558 aa)) lie on the Cytoplasmic side of the membrane. Phosphotyrosine is present on Tyr-510. The 129-residue stretch at 530–658 (NIVAAQIDSN…LNTNMFVQFE (129 aa)) folds into the ZU5 domain. Positions 857 to 938 (ELARLLDMPN…DAVMVLERFL (82 aa)) constitute a Death domain.

This sequence belongs to the unc-5 family. In terms of assembly, interacts (via cytoplasmic domain) with src-1 (via SH2 domain and SH3 domain). Interacts with madd-4. Interacts with unc-129; the interaction is direct. In terms of processing, phosphorylated on different cytoplasmic tyrosine residues. May be phosphorylated on tyrosine residues by src-1. Tyrosine phosphorylation is unc-6-dependent. Glycosylated via C-mannosylation by dpy-19 at Trp-305 and Trp-308. As to expression, expressed in cell bodies and axons of the VNC motor neurons that extend axons to the dorsal midline and within the ventral nerve cord. Expressed in gonadal distal tip cells (DTC).

Its subcellular location is the cell membrane. It is found in the membrane raft. The protein localises to the cell projection. The protein resides in the neuron projection. In terms of biological role, receptor for netrin (unc-6) required for axon guidance. Mediates axon repulsion of neuronal growth cones in the developing nervous system upon ligand binding. Axon migration is mediated by the secreted unc-6, which promotes attraction of neurons and axons through binding to the unc-40 receptor, while repulsion requires both unc-5 and unc-40 receptors. Involved in the ventral-dorsal and anterior-posterior migration of distal tip cells along the body, which may be mediated by Wnt receptor mom-5, ced-10/Rac, ced-12/ELMO and mig-2/RhoG. This is Netrin receptor unc-5 from Caenorhabditis elegans.